The primary structure comprises 328 residues: Sin3 histone deacetylase corepressor complex component SDS3 (328 aa).

Residues 1–64 (MSAAALLAPA…TDLAKHDEED (64 aa)) are disordered. Position 2 is an N-acetylserine (Ser2). The mediates interaction with USP17L2 stretch occupies residues 2-170 (SAAALLAPAP…IENEKLTMEL (169 aa)). Residues 10–21 (APAPAGAPPAPE) are compositionally biased toward pro residues. Acidic residues-rich tracts occupy residues 23–37 (YPEE…EDDE) and 45–54 (SDEDTEDASE). Ser32 and Ser45 each carry phosphoserine. Position 49 is a phosphothreonine (Thr49). Ser53 carries the phosphoserine modification. The stretch at 64-171 (DFVEMKEQMY…ENEKLTMELT (108 aa)) forms a coiled coil. Residues Lys69, Lys178, and Lys201 each participate in a glycyl lysine isopeptide (Lys-Gly) (interchain with G-Cter in SUMO2) cross-link. Positions 226 to 252 (LKSPKRPASPSSPEHLPTTPAESPAQR) are disordered. Residues Ser228, Ser234, and Ser237 each carry the phosphoserine modification. Position 244 is a phosphothreonine (Thr244).

It belongs to the SDS3 family. As to quaternary structure, homodimer. Component of the SIN3 histone deacetylase (HDAC) corepressor complex. Interacts with SIN3A. Interaction with SIN3B enhances the interaction between SIN3B and HDAC1 to form a complex. Interacts with HCFC1. Component of a mSin3A corepressor complex that contains SIN3A, SAP130, SUDS3/SAP45, ARID4B/SAP180, HDAC1 and HDAC2. Interacts with USP17L2; the interaction is direct. Interacts with FOXK2. Polyubiquitinated. 'Lys-63'-polyubiquitinated SUDS3 positively regulates histone deacetylation. Regulated through deubiquitination by USP17L2/USP17 that cleaves 'Lys-63'-linked ubiquitin chains.

Its subcellular location is the nucleus. Its function is as follows. Regulatory protein which represses transcription and augments histone deacetylase activity of HDAC1. May have a potential role in tumor suppressor pathways through regulation of apoptosis. May function in the assembly and/or enzymatic activity of the mSin3A corepressor complex or in mediating interactions between the complex and other regulatory complexes. This chain is Sin3 histone deacetylase corepressor complex component SDS3 (SUDS3), found in Bos taurus (Bovine).